Consider the following 249-residue polypeptide: Triosephosphate isomerase (249 aa).

Substrate contacts are provided by N12 and K14. An N6-acetyllysine modification is found at K14. Position 68 is a 3'-nitrotyrosine (Y68). S80 is subject to Phosphoserine. Residue H96 is the Electrophile of the active site. A Phosphoserine modification is found at S106. K142 participates in a covalent cross-link: Glycyl lysine isopeptide (Lys-Gly) (interchain with G-Cter in SUMO1). K149 bears the N6-succinyllysine mark. K156 carries the N6-acetyllysine; alternate modification. Residue K156 is modified to N6-succinyllysine; alternate. A Phosphoserine modification is found at S159. The Proton acceptor role is filled by E166. At T173 the chain carries Phosphothreonine. Position 194 is an N6-acetyllysine; alternate (K194). K194 is modified (N6-succinyllysine; alternate). An N6-methyllysine; alternate modification is found at K194. Phosphoserine is present on S198. Residue Y209 is modified to 3'-nitrotyrosine. At S212 the chain carries Phosphoserine. Phosphothreonine is present on T214. The residue at position 223 (S223) is a Phosphoserine. N6-acetyllysine is present on K238.

Belongs to the triosephosphate isomerase family. In terms of assembly, homodimer.

It is found in the cytoplasm. The enzyme catalyses dihydroxyacetone phosphate = methylglyoxal + phosphate. It carries out the reaction D-glyceraldehyde 3-phosphate = dihydroxyacetone phosphate. It participates in carbohydrate degradation; glycolysis; D-glyceraldehyde 3-phosphate from glycerone phosphate: step 1/1. It functions in the pathway carbohydrate biosynthesis; gluconeogenesis. In terms of biological role, triosephosphate isomerase is an extremely efficient metabolic enzyme that catalyzes the interconversion between dihydroxyacetone phosphate (DHAP) and D-glyceraldehyde-3-phosphate (G3P) in glycolysis and gluconeogenesis. Its function is as follows. It is also responsible for the non-negligible production of methylglyoxal a reactive cytotoxic side-product that modifies and can alter proteins, DNA and lipids. The sequence is that of Triosephosphate isomerase (TPI1) from Macaca fascicularis (Crab-eating macaque).